We begin with the raw amino-acid sequence, 435 residues long: Chromosomal replication initiator protein DnaA (435 aa).

The tract at residues 1–70 is domain I, interacts with DnaA modulators; it reads MNIGEKILLL…KHLFEIQNSI (70 aa). The tract at residues 70-98 is domain II; that stretch reads IKVDVSILLKNQVESKKAEQKSVQKQQHS. Positions 99–313 are domain III, AAA+ region; it reads LLNPSHTFEN…GILSKLHAYS (215 aa). ATP contacts are provided by G143, G145, K146, and T147. Residues 314 to 435 are domain IV, binds dsDNA; sequence QLMHVDIDLQ…ELTNKITSSS (122 aa).

It belongs to the DnaA family. As to quaternary structure, oligomerizes as a right-handed, spiral filament on DNA at oriC.

It is found in the cytoplasm. In terms of biological role, plays an essential role in the initiation and regulation of chromosomal replication. ATP-DnaA binds to the origin of replication (oriC) to initiate formation of the DNA replication initiation complex once per cell cycle. Binds the DnaA box (a 9 base pair repeat at the origin) and separates the double-stranded (ds)DNA. Forms a right-handed helical filament on oriC DNA; dsDNA binds to the exterior of the filament while single-stranded (ss)DNA is stabiized in the filament's interior. The ATP-DnaA-oriC complex binds and stabilizes one strand of the AT-rich DNA unwinding element (DUE), permitting loading of DNA polymerase. After initiation quickly degrades to an ADP-DnaA complex that is not apt for DNA replication. Binds acidic phospholipids. The polypeptide is Chromosomal replication initiator protein DnaA (Sulfurimonas denitrificans (strain ATCC 33889 / DSM 1251) (Thiomicrospira denitrificans (strain ATCC 33889 / DSM 1251))).